A 529-amino-acid polypeptide reads, in one-letter code: Bifunctional purine biosynthesis protein PurH (529 aa).

Positions 1–148 constitute an MGS-like domain; that stretch reads MQQRRPVRRA…KNHKDVAIVV (148 aa). K287 carries the post-translational modification N6-acetyllysine.

Belongs to the PurH family.

It carries out the reaction (6R)-10-formyltetrahydrofolate + 5-amino-1-(5-phospho-beta-D-ribosyl)imidazole-4-carboxamide = 5-formamido-1-(5-phospho-D-ribosyl)imidazole-4-carboxamide + (6S)-5,6,7,8-tetrahydrofolate. The enzyme catalyses IMP + H2O = 5-formamido-1-(5-phospho-D-ribosyl)imidazole-4-carboxamide. The protein operates within purine metabolism; IMP biosynthesis via de novo pathway; 5-formamido-1-(5-phospho-D-ribosyl)imidazole-4-carboxamide from 5-amino-1-(5-phospho-D-ribosyl)imidazole-4-carboxamide (10-formyl THF route): step 1/1. It participates in purine metabolism; IMP biosynthesis via de novo pathway; IMP from 5-formamido-1-(5-phospho-D-ribosyl)imidazole-4-carboxamide: step 1/1. This chain is Bifunctional purine biosynthesis protein PurH, found in Escherichia coli O6:H1 (strain CFT073 / ATCC 700928 / UPEC).